The chain runs to 169 residues: Peptidyl-prolyl cis-trans isomerase (169 aa).

The PPIase cyclophilin-type domain occupies 5 to 168 (FFDMTIGGQP…SEVKIAKCGQ (164 aa)).

It belongs to the cyclophilin-type PPIase family.

Its subcellular location is the cytoplasm. The catalysed reaction is [protein]-peptidylproline (omega=180) = [protein]-peptidylproline (omega=0). With respect to regulation, binds cyclosporin A (CsA). CsA mediates some of its effects via an inhibitory action on PPIase. In terms of biological role, PPIases accelerate the folding of proteins. It catalyzes the cis-trans isomerization of proline imidic peptide bonds in oligopeptides. The protein is Peptidyl-prolyl cis-trans isomerase of Unspecified eudicot DB-1992.